The sequence spans 957 residues: Receptor-like protein 34 (957 aa).

Positions 1 to 31 (MKGSWVVSTSIIRITLSFTFLFICHFSDVLA) are cleaved as a signal peptide. Residues 32-910 (APTRHLCRPE…EEEDEDLISW (879 aa)) lie on the Extracellular side of the membrane. Residues asparagine 78, asparagine 101, asparagine 114, asparagine 143, asparagine 167, asparagine 191, and asparagine 215 are each glycosylated (N-linked (GlcNAc...) asparagine). 18 LRR repeats span residues 120-143 (LHFLTTLDRSHNDFEGQITSSIEN), 144-167 (LSHLTSLDLSYNRFSGQILNSIGN), 168-192 (LSRLTSLDLSFNQFSGQIPSSIGNL), 194-216 (HLTFLGLSGNRFFGQIPSSIGNL), 217-240 (SHLTFLGLSGNRFFGQFPSSIGGL), 241-264 (SNLTNLHLSYNKYSGQIPSSIGNL), 266-287 (QLIVLYLSVNNFYGEIPSSFGN), 288-312 (LNQLTRLDVSFNKLGGNFPNVLLNL), 313-336 (TGLSVVSLSNNKFTGTLPPNITSL), 338-360 (NLMAFYASDNAFTGTFPSFLFII), 361-384 (PSLTYLGLSGNQLKGTLEFGNISS), 386-409 (SNLQYLNIGSNNFIGPIPSSISKL), 412-434 (LQELGISHLNTQCRPVDFSIFSH), 435-459 (LKSLDDLRLSYLTTTTIDLNDILPY), 460-483 (FKTLRSLDLSGNLVSATNKSSVSS), 487-510 (SQSIQSLYLSGCGITDFPEILRTQ), 511-534 (HELGFLDVSNNKIKGQVPGWLWTL), and 535-557 (PNLFYLNLSNNTFIGFQRPTKPE). 2 N-linked (GlcNAc...) asparagine glycosylation sites follow: asparagine 242 and asparagine 263. N-linked (GlcNAc...) asparagine glycosylation is found at asparagine 311 and asparagine 332. N-linked (GlcNAc...) asparagine glycosylation occurs at asparagine 381. The N-linked (GlcNAc...) asparagine glycan is linked to asparagine 477. 6 N-linked (GlcNAc...) asparagine glycosylation sites follow: asparagine 541, asparagine 544, asparagine 569, asparagine 593, asparagine 608, and asparagine 618. The stretch at 558-580 (PSMAYLLGSNNNFTGKIPSFICE) is one LRR 19; degenerate repeat. 10 LRR repeats span residues 581 to 605 (LRSLYTLDLSDNNFSGSIPRCMENL), 606 to 630 (KSNLSELNLRQNNLSGGFPEHIFES), 632 to 652 (RSLDVGHNQLVGKLPRSLRFF), 653 to 675 (SNLEVLNVESNRINDMFPFWLSS), 677 to 698 (QKLQVLVLRSNAFHGPINQALF), 699 to 722 (PKLRIIDISHNHFNGSLPTEYFVE), 765 to 789 (LTIYTAVDFSGNKFEGEIPKSIGLL), 790 to 813 (KELHVLNLSNNAFTGHIPSSIGNL), 815 to 837 (ALESLDVSQNKLYGEIPQEIGNL), and 839 to 862 (LLSYMNFSHNQLTGLVPGGQQFLT). Residue asparagine 712 is glycosylated (N-linked (GlcNAc...) asparagine). Residues asparagine 796, asparagine 812, asparagine 836, and asparagine 844 are each glycosylated (N-linked (GlcNAc...) asparagine). Residues 911–931 (IAAAIGFGPGIAFGLMFGYIL) traverse the membrane as a helical segment. The Cytoplasmic segment spans residues 932–957 (VSYKPEWFMNPFGRNNRRRKRHTTTH).

Belongs to the RLP family.

It is found in the cell membrane. The polypeptide is Receptor-like protein 34 (Arabidopsis thaliana (Mouse-ear cress)).